The primary structure comprises 399 residues: uncharacterized protein (399 aa).

10 helical membrane passes run His6–Pro26, Lys27–Leu47, Leu60–Asp80, Ile111–Phe131, Met147–Ile167, Ser173–Ala193, Gly195–Ile215, Ile220–Phe240, Gly328–Lys348, and Ile362–Ala382.

The protein resides in the cell membrane. This is an uncharacterized protein from Haemophilus influenzae (strain ATCC 51907 / DSM 11121 / KW20 / Rd).